Consider the following 648-residue polypeptide: Macrolide export ATP-binding/permease protein MacB (648 aa).

One can recognise an ABC transporter domain in the interval 5-243 (LELKDIRRSY…AGGTEPVVNT (239 aa)). Residue 41–48 (GASGSGKS) coordinates ATP. Transmembrane regions (helical) follow at residues 273–293 (LLTM…VVVG), 523–543 (LFLT…VMNI), 576–596 (AVLV…LIAF), and 600–620 (LFLP…AFLC).

It belongs to the ABC transporter superfamily. Macrolide exporter (TC 3.A.1.122) family. Homodimer. Part of the tripartite efflux system MacAB-TolC, which is composed of an inner membrane transporter, MacB, a periplasmic membrane fusion protein, MacA, and an outer membrane component, TolC. The complex forms a large protein conduit and can translocate molecules across both the inner and outer membranes. Interacts with MacA.

It is found in the cell inner membrane. Its function is as follows. Part of the tripartite efflux system MacAB-TolC. MacB is a non-canonical ABC transporter that contains transmembrane domains (TMD), which form a pore in the inner membrane, and an ATP-binding domain (NBD), which is responsible for energy generation. Confers resistance against macrolides. The chain is Macrolide export ATP-binding/permease protein MacB from Shigella sonnei (strain Ss046).